A 223-amino-acid polypeptide reads, in one-letter code: Adenylate kinase (223 aa).

10–15 (GSGKGT) provides a ligand contact to ATP. An NMP region spans residues 30-59 (ESGAIFRKHIGGGTELGMKAKEYIDKGELV). AMP is bound by residues S31, R36, 57–59 (ELV), 84–87 (GFPR), and Q91. The tract at residues 125-164 (GRRLCENDPNHPNNKFIDAIKPDGDKCRVCGGALSERADD) is LID. Residue R126 coordinates ATP. R161 and R173 together coordinate AMP. Residue G209 participates in ATP binding.

Belongs to the adenylate kinase family. In terms of assembly, monomer.

The protein localises to the cytoplasm. It carries out the reaction AMP + ATP = 2 ADP. Its pathway is purine metabolism; AMP biosynthesis via salvage pathway; AMP from ADP: step 1/1. Catalyzes the reversible transfer of the terminal phosphate group between ATP and AMP. Plays an important role in cellular energy homeostasis and in adenine nucleotide metabolism. This Maridesulfovibrio salexigens (strain ATCC 14822 / DSM 2638 / NCIMB 8403 / VKM B-1763) (Desulfovibrio salexigens) protein is Adenylate kinase.